The following is a 170-amino-acid chain: Macro domain-containing protein DR_2288 (170 aa).

Positions 1 to 170 (MPLELVQGDI…HVFERALAQL (170 aa)) constitute a Macro domain.

The protein belongs to the MacroD-type family.

This Deinococcus radiodurans (strain ATCC 13939 / DSM 20539 / JCM 16871 / CCUG 27074 / LMG 4051 / NBRC 15346 / NCIMB 9279 / VKM B-1422 / R1) protein is Macro domain-containing protein DR_2288.